The chain runs to 168 residues: Cell division inhibitor SulA (168 aa).

Residues Ala106–Tyr112 form a ftsZ binding region. The tract at residues Lys161–His168 is lon protease binding.

Belongs to the SulA family. In terms of assembly, interacts with FtsZ. Post-translationally, is rapidly cleaved and degraded by the Lon protease once DNA damage is repaired.

In terms of biological role, component of the SOS system and an inhibitor of cell division. Accumulation of SulA causes rapid cessation of cell division and the appearance of long, non-septate filaments. In the presence of GTP, binds a polymerization-competent form of FtsZ in a 1:1 ratio, thus inhibiting FtsZ polymerization and therefore preventing it from participating in the assembly of the Z ring. This mechanism prevents the premature segregation of damaged DNA to daughter cells during cell division. This is Cell division inhibitor SulA from Yersinia pestis bv. Antiqua (strain Antiqua).